Here is a 33-residue protein sequence, read N- to C-terminus: Cytochrome c oxidase subunit 5B liver, mitochondrial (33 aa).

This sequence belongs to the cytochrome c oxidase subunit 5B family. Component of the cytochrome c oxidase (complex IV, CIV), a multisubunit enzyme composed of 14 subunits. The complex is composed of a catalytic core of 3 subunits MT-CO1, MT-CO2 and MT-CO3, encoded in the mitochondrial DNA, and 11 supernumerary subunits COX4I, COX5A, COX5B, COX6A, COX6B, COX6C, COX7A, COX7B, COX7C, COX8 and NDUFA4, which are encoded in the nuclear genome. The complex exists as a monomer or a dimer and forms supercomplexes (SCs) in the inner mitochondrial membrane with NADH-ubiquinone oxidoreductase (complex I, CI) and ubiquinol-cytochrome c oxidoreductase (cytochrome b-c1 complex, complex III, CIII), resulting in different assemblies (supercomplex SCI(1)III(2)IV(1) and megacomplex MCI(2)III(2)IV(2)).

Its subcellular location is the mitochondrion inner membrane. It functions in the pathway energy metabolism; oxidative phosphorylation. In terms of biological role, component of the cytochrome c oxidase, the last enzyme in the mitochondrial electron transport chain which drives oxidative phosphorylation. The respiratory chain contains 3 multisubunit complexes succinate dehydrogenase (complex II, CII), ubiquinol-cytochrome c oxidoreductase (cytochrome b-c1 complex, complex III, CIII) and cytochrome c oxidase (complex IV, CIV), that cooperate to transfer electrons derived from NADH and succinate to molecular oxygen, creating an electrochemical gradient over the inner membrane that drives transmembrane transport and the ATP synthase. Cytochrome c oxidase is the component of the respiratory chain that catalyzes the reduction of oxygen to water. Electrons originating from reduced cytochrome c in the intermembrane space (IMS) are transferred via the dinuclear copper A center (CU(A)) of subunit 2 and heme A of subunit 1 to the active site in subunit 1, a binuclear center (BNC) formed by heme A3 and copper B (CU(B)). The BNC reduces molecular oxygen to 2 water molecules using 4 electrons from cytochrome c in the IMS and 4 protons from the mitochondrial matrix. The sequence is that of Cytochrome c oxidase subunit 5B liver, mitochondrial from Oncorhynchus mykiss (Rainbow trout).